We begin with the raw amino-acid sequence, 441 residues long: GTPase Der (441 aa).

EngA-type G domains are found at residues 4 to 169 and 178 to 353; these read PVVA…PDSS and PRVA…ENNS. GTP contacts are provided by residues 10-17, 57-61, 120-123, 184-191, 231-235, and 296-299; these read GRPNVGKS, DTGGI, NKVD, GKPNVGKS, DTAGL, and NKWD. Residues 354–438 enclose the KH-like domain; that stretch reads MRVATGVLNE…ALKFITRERK (85 aa).

The protein belongs to the TRAFAC class TrmE-Era-EngA-EngB-Septin-like GTPase superfamily. EngA (Der) GTPase family. Associates with the 50S ribosomal subunit.

In terms of biological role, GTPase that plays an essential role in the late steps of ribosome biogenesis. The protein is GTPase Der of Agathobacter rectalis (strain ATCC 33656 / DSM 3377 / JCM 17463 / KCTC 5835 / VPI 0990) (Eubacterium rectale).